We begin with the raw amino-acid sequence, 435 residues long: Histidine--tRNA ligase (435 aa).

It belongs to the class-II aminoacyl-tRNA synthetase family.

The protein resides in the cytoplasm. It catalyses the reaction tRNA(His) + L-histidine + ATP = L-histidyl-tRNA(His) + AMP + diphosphate + H(+). The polypeptide is Histidine--tRNA ligase (hisS) (Aeropyrum pernix (strain ATCC 700893 / DSM 11879 / JCM 9820 / NBRC 100138 / K1)).